Consider the following 379-residue polypeptide: Ascochitine biosynthesis cluster protein 8 (379 aa).

Helical transmembrane passes span 87-107 (ELIASVLALVARFGALVLDLE), 116-136 (VGPVSILGFCTGLLAGAVAAC), and 141-161 (IKVFDLACEVLAISFRLVVAL).

It localises to the membrane. It functions in the pathway mycotoxin biosynthesis. Functionally, part of the gene cluster that mediates the biosynthesis of the selective antifungal agent ascochitine, an o-quinone methide that plays a possible protective role against other microbial competitors in nature and is considered to be important for pathogenicity of legume-associated Didymella species. The pathway probably begins with the synthesis of a keto-aldehyde intermediate by the ascochitine non-reducing polyketide synthase pksAC from successive condensations of 4 malonyl-CoA units, presumably with a simple acetyl-CoA starter unit. Release of the keto-aldehyde intermediate is consistent with the presence of the C-terminal reductive release domain. The HR-PKS (orf7) probably makes a diketide starter unit which is passed to the non-reducing polyketide synthase pksAC for further extension, producing ascochital and ascochitine. The aldehyde dehydrogenase (orf1), the 2-oxoglutarate-dependent dioxygenase (orf3) and the dehydrogenase (orf9) are probably involved in subsequent oxidations of methyl groups to the carboxylic acid of the heterocyclic ring. The ascochitine gene cluster also includes a gene encoding a short peptide with a cupin domain (orf2) that is often found in secondary metabolite gene clusters and which function has still to be determined. The polypeptide is Ascochitine biosynthesis cluster protein 8 (Didymella fabae (Leaf and pod spot disease fungus)).